The sequence spans 528 residues: Putative pumilio homolog 10 (528 aa).

The PUM-HD domain occupies 188–528; the sequence is EGSGASYPDE…KIFSKTILKK (341 aa). Pumilio repeat units follow at residues 213-248, 249-284, 285-323, 325-360, 361-396, 397-433, 434-465, and 466-503; these read EIYG…VIFL, EIID…MIVS, VLTS…ALVK, ALEP…FVVE, AATE…RLVA, EISR…LPFR, THCI…EIVR, and ELLS…RLVE.

Its subcellular location is the cytoplasm. Sequence-specific RNA-binding protein that regulates translation and mRNA stability by binding the 3'-UTR of target mRNAs. The polypeptide is Putative pumilio homolog 10 (APUM10) (Arabidopsis thaliana (Mouse-ear cress)).